Consider the following 303-residue polypeptide: Glycine--tRNA ligase alpha subunit (303 aa).

The protein belongs to the class-II aminoacyl-tRNA synthetase family. As to quaternary structure, tetramer of two alpha and two beta subunits.

It is found in the cytoplasm. It catalyses the reaction tRNA(Gly) + glycine + ATP = glycyl-tRNA(Gly) + AMP + diphosphate. This is Glycine--tRNA ligase alpha subunit from Syntrophomonas wolfei subsp. wolfei (strain DSM 2245B / Goettingen).